Consider the following 483-residue polypeptide: Glutamyl-tRNA(Gln) amidotransferase subunit A (483 aa).

Residues Lys75 and Ser150 each act as charge relay system in the active site. The Acyl-ester intermediate role is filled by Ser174.

It belongs to the amidase family. GatA subfamily. Heterotrimer of A, B and C subunits.

It catalyses the reaction L-glutamyl-tRNA(Gln) + L-glutamine + ATP + H2O = L-glutaminyl-tRNA(Gln) + L-glutamate + ADP + phosphate + H(+). Allows the formation of correctly charged Gln-tRNA(Gln) through the transamidation of misacylated Glu-tRNA(Gln) in organisms which lack glutaminyl-tRNA synthetase. The reaction takes place in the presence of glutamine and ATP through an activated gamma-phospho-Glu-tRNA(Gln). This is Glutamyl-tRNA(Gln) amidotransferase subunit A from Legionella pneumophila (strain Corby).